The primary structure comprises 4545 residues: Prolow-density lipoprotein receptor-related protein 1 (4545 aa).

The signal sequence occupies residues 1-19 (MLTPPLLLLLPLLSALVSG). Residues 20-4424 (ATMDAPKTCS…SQQQPGHMAS (4405 aa)) lie on the Extracellular side of the membrane. 2 LDL-receptor class A domains span residues 26–67 (KTCS…ICPQ) and 71–111 (QRCP…HCRE). 6 disulfide bridges follow: Cys28–Cys41, Cys35–Cys54, Cys48–Cys65, Cys73–Cys86, Cys80–Cys99, and Cys93–Cys109. Residues 112–150 (LRANCSRMGCQHHCVPTPSGPTCYCNSSFQLQADGKTCK) form the EGF-like 1 domain. Asn115 carries an N-linked (GlcNAc...) asparagine glycan. 6 disulfides stabilise this stretch: Cys116–Cys125, Cys121–Cys134, Cys136–Cys149, Cys155–Cys165, Cys161–Cys174, and Cys176–Cys189. N-linked (GlcNAc...) asparagine glycosylation occurs at Asn137. An EGF-like 2; calcium-binding domain is found at 151–190 (DFDECSVYGTCSQLCTNTDGSFTCGCVEGYLLQPDNRSCK). Asn186, Asn240, and Asn275 each carry an N-linked (GlcNAc...) asparagine glycan. LDL-receptor class B repeat units lie at residues 293–335 (GNFY…DPAM), 336–379 (GKVF…DLVS), and 380–423 (RLVY…FENY). Asn358 carries N-linked (GlcNAc...) asparagine glycosylation. Residue Asn447 is glycosylated (N-linked (GlcNAc...) asparagine). The EGF-like 3 domain maps to 475–521 (RSHACENDQYGKPGGCSDICLLANSHKARTCRCRSGFSLGSDGKSCK). Disulfide bonds link Cys479-Cys494, Cys490-Cys505, and Cys507-Cys520. 4 LDL-receptor class B repeats span residues 572–614 (GFIY…DWMG), 615–660 (DNLY…DPLN), 661–711 (GWMY…DIPA), and 712–755 (GRLY…HGNY). A glycan (N-linked (GlcNAc...) asparagine) is linked at Asn730. Positions 804-844 (GTNKCRVNNGGCSSLCLATPGSRQCACAEDQVLDTDGVTCL) constitute an EGF-like 4 domain. 33 cysteine pairs are disulfide-bonded: Cys808–Cys819, Cys815–Cys828, Cys830–Cys843, Cys855–Cys867, Cys862–Cys880, Cys874–Cys891, Cys896–Cys908, Cys903–Cys921, Cys915–Cys932, Cys937–Cys949, Cys944–Cys962, Cys956–Cys972, Cys977–Cys990, Cys985–Cys1003, Cys997–Cys1012, Cys1016–Cys1028, Cys1023–Cys1041, Cys1035–Cys1052, Cys1063–Cys1076, Cys1070–Cys1089, Cys1083–Cys1098, Cys1105–Cys1119, Cys1113–Cys1132, Cys1126–Cys1141, Cys1146–Cys1160, Cys1153–Cys1173, Cys1167–Cys1183, Cys1186–Cys1197, Cys1193–Cys1207, Cys1209–Cys1222, Cys1228–Cys1238, Cys1234–Cys1247, and Cys1249–Cys1262. 8 consecutive LDL-receptor class A domains span residues 853–893 (PQCQ…LCHQ), 894–934 (HTCP…TCSA), 935–974 (RTCPPNQFSCASGRCIPISWTCDLDDDCGDRSDESASCAY), 975–1014 (PTCFPLTQFTCNNGRCININWRCDNDNDCGDNSDEAGCSH), 1014–1054 (HSCS…NCTN), 1061–1100 (GGCHSDEFQCRLDGLCIPLRWRCDGDTDCMDSSDEKSCEG), 1103–1143 (HVCD…NCEA), and 1144–1183 (LACRPPSHPCANNTSVCLPPDKLCDGKDDCGDGSDEGELC). Ca(2+)-binding residues include Trp872, Asp875, Asp877, Asp879, Asp885, and Glu886. An N-linked (GlcNAc...) asparagine glycan is attached at Asn929. Ca(2+)-binding residues include Trp1033, Asp1036, Asp1038, Asp1040, Asp1046, and Glu1047. A glycan (N-linked (GlcNAc...) asparagine) is linked at Asn1051. Residues Trp1081, Asp1084, Asp1086, Asp1088, Asp1094, and Glu1095 each coordinate Ca(2+). 2 N-linked (GlcNAc...) asparagine glycosylation sites follow: Asn1155 and Asn1156. 2 consecutive EGF-like domains span residues 1184–1223 (DQCSLNNGGCSHNCSVAPGEGIVCSCPLGMELGSDNHTCQ) and 1224–1263 (IQSYCAKHLKCSQKCDQNKFSVKCSCYEGWVLEPDGESCR). 2 N-linked (GlcNAc...) asparagine glycosylation sites follow: Asn1196 and Asn1219. LDL-receptor class B repeat units lie at residues 1310-1356 (SALY…DWIA), 1357-1399 (GNIY…DPRD), 1400-1446 (GILF…DYLE), 1447-1491 (KRIL…YGGE), and 1492-1532 (VYWT…YHPS). An N-linked (GlcNAc...) asparagine glycan is attached at Asn1512. One can recognise an EGF-like 7 domain in the interval 1537–1580 (APNPCEANGGRGPCSHLCLINYNRTVSCACPHLMKLHKDNTTCY). Disulfide bonds link Cys1541-Cys1554, Cys1550-Cys1564, and Cys1566-Cys1579. N-linked (GlcNAc...) asparagine glycosylation is found at Asn1559, Asn1576, Asn1617, and Asn1646. 4 LDL-receptor class B repeats span residues 1628–1670 (QRVY…DWVS), 1671–1714 (RNLF…HPLR), 1715–1754 (GKLYWTDGDNISMANMDGSNHTLLFSGQKGPVGLAIDFPE), and 1755–1799 (SKLY…MGDK). Asn1724, Asn1734, Asn1764, and Asn1826 each carry an N-linked (GlcNAc...) asparagine glycan. In terms of domain architecture, EGF-like 8 spans 1847–1888 (GTNPCSVNNGDCSQLCLPTSETTRSCMCTAGYSLRSGQQACE). 3 disulfide bridges follow: Cys1851–Cys1862, Cys1858–Cys1872, and Cys1874–Cys1887. Asn1934 is a glycosylation site (N-linked (GlcNAc...) asparagine). LDL-receptor class B repeat units lie at residues 1935–1977 (DTIY…DWIA), 1978–2020 (GNIY…HPEK), 2021–2064 (GYLF…DYQG), and 2065–2108 (GKLY…FEDF). Residue Asn1996 is glycosylated (N-linked (GlcNAc...) asparagine). At Lys2010 the chain carries N6-acetyllysine. The N-linked (GlcNAc...) asparagine glycan is linked to Asn2049. 2 N-linked (GlcNAc...) asparagine glycosylation sites follow: Asn2118 and Asn2128. The EGF-like 9 domain maps to 2156–2196 (GTNVCAVANGGCQQLCLYRGGGQRACACAHGMLAEDGASCR). Disulfide bonds link Cys2160-Cys2171, Cys2167-Cys2181, and Cys2183-Cys2195. 5 LDL-receptor class B repeats span residues 2254–2295 (NRIF…HRGW), 2296–2344 (DTLY…DECQ), 2345–2389 (NLMF…DHRA), 2390–2432 (EKLY…YGEH), and 2433–2474 (IFWT…VAND). N-linked (GlcNAc...) asparagine glycosylation occurs at Asn2473. Residues 2479–2519 (ELSPCRINNGGCQDLCLLTHQGHVNCSCRGGRILQEDFTCR) enclose the EGF-like 10 domain. 3 cysteine pairs are disulfide-bonded: Cys2483–Cys2494, Cys2490–Cys2504, and Cys2506–Cys2518. Asn2503 is a glycosylation site (N-linked (GlcNAc...) asparagine). N-linked (GlcNAc...) asparagine glycosylation is present at Asn2522. 7 LDL-receptor class A domains span residues 2523–2564 (SSCR…YCNS), 2565–2603 (RRCKKTFRQCNNGRCVSNMLWCNGVDDCGDGSDEIPCNK), 2604–2642 (TACGVGEFRCRDGSCIGNSSRCNQFVDCEDASDEMNCSA), 2643–2691 (TDCS…DCPG), 2695–2733 (PRCPLNYFACPSGRCIPMSWTCDKEDDCENGEDETHCNK), 2733–2772 (KFCSEAQFECQNHRCISKQWLCDGSDDCGDGSDEAAHCEG), and 2773–2815 (KTCG…GCLY). 6 disulfides stabilise this stretch: Cys2525-Cys2538, Cys2533-Cys2551, Cys2545-Cys2562, Cys2567-Cys2579, Cys2574-Cys2592, and Cys2586-Cys2601. Asn2602 carries N-linked (GlcNAc...) asparagine glycosylation. Intrachain disulfides connect Cys2606/Cys2618, Cys2613/Cys2631, Cys2625/Cys2640, Cys2645/Cys2667, Cys2661/Cys2680, Cys2674/Cys2689, Cys2697/Cys2709, Cys2704/Cys2722, Cys2716/Cys2731, Cys2735/Cys2747, Cys2742/Cys2760, Cys2754/Cys2770, Cys2775/Cys2788, Cys2782/Cys2801, and Cys2795/Cys2813. N-linked (GlcNAc...) asparagine glycans are attached at residues Asn2621 and Asn2639. N-linked (GlcNAc...) asparagine glycosylation is present at Asn2816. LDL-receptor class A domains are found at residues 2817 to 2856 (STCDDREFMCQNRLCIPKHFVCDHDRDCADGSDESPECEY), 2857 to 2900 (PTCG…HCTS), and 2903 to 2941 (HKCNASSQFLCSSGRCVAEALLCNGQDDCGDGSDERGCH). Cystine bridges form between Cys2819/Cys2831, Cys2826/Cys2844, Cys2838/Cys2854, Cys2859/Cys2871, Cys2866/Cys2885, Cys2879/Cys2898, Cys2905/Cys2918, Cys2913/Cys2931, Cys2925/Cys2940, Cys2945/Cys2957, Cys2953/Cys2966, Cys2968/Cys2981, Cys2987/Cys2997, Cys2993/Cys3006, and Cys3008/Cys3022. An N-linked (GlcNAc...) asparagine glycan is attached at Asn2906. Residues 2942 to 2982 (VNECLSRKLSGCSQDCEDLKIGFKCRCRPGFRLKDDGRTCA) enclose the EGF-like 11 domain. The region spanning 2983 to 3023 (DLDECSTTFPCSQLCINTHGSYKCLCVEGYAPRGGDPHSCK) is the EGF-like 12; calcium-binding domain. 2 N-linked (GlcNAc...) asparagine glycosylation sites follow: Asn3049 and Asn3090. 5 LDL-receptor class B repeats span residues 3070-3114 (QMIY…DWVG), 3115-3157 (GNLY…DVQN), 3158-3201 (GYLY…DYVT), 3202-3244 (ERIY…FEDY), and 3245-3285 (VYWT…FHAL). Asn3265 is a glycosylation site (N-linked (GlcNAc...) asparagine). One can recognise an EGF-like 13 domain in the interval 3291-3332 (PNHPCKVNNGGCSNLCLLSPGGGHKCACPTNFYLGGDGRTCV). Cystine bridges form between Cys3295/Cys3306, Cys3302/Cys3316, and Cys3318/Cys3331. LDL-receptor class A domains are found at residues 3333–3372 (SNCTASQFVCKNDKCIPFWWKCDTEDDCGDHSDEPPDCPE), 3373–3411 (FKCRPGQFQCSTGICTNPAFICDGDNDCQDNSDEANCDI), 3412–3451 (HVCLPSQFKCTNTNRCIPGIFRCNGQDNCGDGEDERDCPE), 3452–3492 (VTCA…NCTQ), 3493–3534 (MTCG…ECDE), 3535–3573 (RTCEPYQFRCKNNRCVPGRWQCDYDNDCGDNSDEESCTP), 3574–3612 (RPCSESEFSCANGRCIAGRWKCDGDHDCADGSDEKDCTP), 3612–3650 (PRCDMDQFQCKSGHCIPLRWRCDADADCMDGSDEEACGT), 3653–3693 (RTCP…ECAR), 3694–3734 (FICP…DCEP), and 3740–3779 (PHCKDKKEFLCRNQRCLSSSLRCNMFDDCGDGSDEEDCSI). A glycan (N-linked (GlcNAc...) asparagine) is linked at Asn3334. 39 disulfides stabilise this stretch: Cys3335–Cys3347, Cys3342–Cys3360, Cys3354–Cys3370, Cys3375–Cys3387, Cys3382–Cys3400, Cys3394–Cys3409, Cys3414–Cys3427, Cys3421–Cys3440, Cys3434–Cys3449, Cys3454–Cys3467, Cys3461–Cys3480, Cys3474–Cys3490, Cys3495–Cys3508, Cys3502–Cys3521, Cys3515–Cys3532, Cys3537–Cys3549, Cys3544–Cys3562, Cys3556–Cys3571, Cys3576–Cys3588, Cys3583–Cys3601, Cys3595–Cys3610, Cys3614–Cys3626, Cys3621–Cys3639, Cys3633–Cys3648, Cys3655–Cys3667, Cys3662–Cys3680, Cys3674–Cys3691, Cys3696–Cys3710, Cys3704–Cys3723, Cys3717–Cys3732, Cys3742–Cys3755, Cys3750–Cys3768, Cys3762–Cys3777, Cys3786–Cys3799, Cys3793–Cys3808, Cys3810–Cys3823, Cys3829–Cys3839, Cys3835–Cys3848, and Cys3850–Cys3861. N-linked (GlcNAc...) asparagine glycosylation is present at Asn3489. Asn3663 carries an N-linked (GlcNAc...) asparagine glycan. EGF-like domains follow at residues 3782-3824 (KLTS…PGCQ) and 3825-3862 (DINECLRFGTCSQLCNNTKGGHLCSCARNFMKTHNTCK). An N-linked (GlcNAc...) asparagine glycan is attached at Asn3789. An N-linked (GlcNAc...) asparagine glycan is attached at Asn3840. LDL-receptor class B repeat units follow at residues 3913 to 3955 (GRVY…HLNI), 3971 to 4013 (GNVY…DPLR), 4014 to 4057 (GTMY…DYHN), and 4058 to 4102 (ERLY…FEDY). The Recognition site for proteolytical processing signature appears at 3941–3944 (RHRR). Asn3954 carries an N-linked (GlcNAc...) asparagine glycan. N-linked (GlcNAc...) asparagine glycosylation is found at Asn4076 and Asn4126. 7 consecutive EGF-like domains span residues 4148 to 4184 (VTNPCDRKKCEWLCLLSPSGPVCTCPNGKRLDNGTCV), 4197 to 4233 (RPGTCTLQCFNGGSCFLNARRQPKCRCQPRYTGDKCE), 4233 to 4269 (ELDQCWEYCHNGGTCAASPSGMPTCRCPTGFTGPKCT), 4269 to 4305 (TAQVCAGYCSNNSTCTVNQGNQPQCRCLPGFLGDRCQ), 4305 to 4341 (QYRQCSGFCENFGTCQMAADGSRQCRCTVYFEGPRCE), 4341 to 4376 (EVNKCSRCLQGACVVNKQTGDVTCNCTDGRVAPSCL), and 4374 to 4410 (SCLTCIDHCSNGGSCTMNSKMMPECQCPPHMTGPRCE). 17 disulfides stabilise this stretch: Cys4152–Cys4161, Cys4157–Cys4170, Cys4172–Cys4183, Cys4201–Cys4211, Cys4205–Cys4221, Cys4223–Cys4232, Cys4237–Cys4247, Cys4241–Cys4257, Cys4259–Cys4268, Cys4273–Cys4283, Cys4277–Cys4293, Cys4295–Cys4304, Cys4309–Cys4319, Cys4313–Cys4329, Cys4331–Cys4340, Cys4345–Cys4353, and Cys4348–Cys4364. Asn4180 is a glycosylation site (N-linked (GlcNAc...) asparagine). N-linked (GlcNAc...) asparagine glycans are attached at residues Asn4279 and Asn4280. Asn4365 carries an N-linked (GlcNAc...) asparagine glycan. Disulfide bonds link Cys4366–Cys4375, Cys4378–Cys4388, Cys4382–Cys4398, and Cys4400–Cys4409. The chain crosses the membrane as a helical span at residues 4425 to 4445 (ILIPLLLLLLLLLVAGVVFWY). The Cytoplasmic segment spans residues 4446-4545 (KRRVRGAKGF…PEDEIGDPLA (100 aa)). Positions 4446 to 4545 (KRRVRGAKGF…PEDEIGDPLA (100 aa)) are interaction with MAFB. Position 4461 is a phosphothreonine (Thr4461). Residues 4503 to 4508 (FTNPVY) carry the NPXY motif motif. Tyr4508 bears the Phosphotyrosine mark. Phosphoserine is present on residues Ser4518, Ser4521, and Ser4524.

It belongs to the LDLR family. Heterodimer of an 85-kDa membrane-bound carboxyl subunit and a non-covalently attached 515-kDa N-terminal subunit. Intracellular domain interacts with MAFB. Found in a complex with PID1/PCLI1, LRP1 and CUBNI. Interacts with SNX17, PID1/PCLI1, PDGF and CUBN. The intracellular domain interacts with SHC1, GULP1 and DAB1. Can weakly interact (via NPXY motif) with DAB2 (via PID domain); the interaction is enhanced by tyrosine phosphorylation of the NPXY motif. Interacts with MDK; promotes neuronal survival. Interacts with LRPAP1; this interaction is followed by rapid internalization. Interacts with uPA/PLAU and PAI1/SERPINE1, either individually or in complex with each other, leading to rapid endocytosis; this interaction is abolished in the presence of LRPAP1/RAP. Also interacts with tPA/PLAT alone or in complex with SERPINE1. Interacts with the urokinase receptor PLAUR; this interaction leads to PLAUR internalization and is impaired in the presence of SORL1. Interacts with PDGFB. Interacts with TAU/MAPT, leading to endocytosis; this interaction is reduced in the presence of LRPAP1/RAP. Interacts with IGFBP3. Interacts with ADGRG6. Phosphorylated on serine and threonine residues. Post-translationally, phosphorylated on tyrosine residues upon stimulation with PDGF. Tyrosine phosphorylation promotes interaction with SHC1. In terms of processing, cleaved into a 85 kDa membrane-spanning subunit (LRP-85) and a 515 kDa large extracellular domain (LRP-515) that remains non-covalently associated. Gamma-secretase-dependent cleavage of LRP-85 releases the intracellular domain from the membrane.

It is found in the cell membrane. It localises to the membrane. Its subcellular location is the coated pit. The protein localises to the golgi outpost. The protein resides in the cytoplasm. It is found in the cytoskeleton. It localises to the microtubule organizing center. Its subcellular location is the nucleus. Endocytic receptor involved in endocytosis and in phagocytosis of apoptotic cells. Required for early embryonic development. Involved in cellular lipid homeostasis. Involved in the plasma clearance of chylomicron remnants and activated LRPAP1 (alpha 2-macroglobulin), as well as the local metabolism of complexes between plasminogen activators and their endogenous inhibitors. Acts as an alpha-2-macroglobulin receptor. Acts as a TAU/MAPT receptor and controls the endocytosis of TAU/MAPT as well as its subsequent spread. May modulate cellular events, such as APP metabolism, kinase-dependent intracellular signaling, neuronal calcium signaling as well as neurotransmission. Also acts as a receptor for IGFBP3 to mediate cell growth inhibition. Its function is as follows. (Microbial infection) Functions as a receptor for Vibrio cholerae cholix toxin and for Pseudomonas aeruginosa exotoxin A. This chain is Prolow-density lipoprotein receptor-related protein 1, found in Mus musculus (Mouse).